The following is a 522-amino-acid chain: Major facilitator-type transporter sorT (522 aa).

Residues 1–21 (MSHTEPKAPVNTGEVENGHLY) form a disordered region. The next 12 helical transmembrane spans lie at 52-72 (WFIAAIATLSVFAVTFTSSAY), 89-109 (VFIVGLSLFVLGFAIGPAVWA), 121-141 (QILWIITHIAMVAFLGGSAGS), 143-163 (NVATLLILRFFAGTFGGSPLV), 183-203 (TIYCVAPFLGPILGPIVGGFV), 211-231 (WVQGVCVIFIGVVGILGIVFI), 280-300 (WIFLFLEPIVLIASVYMAIIY), 324-344 (IGGLAFLGIAVGIIFGLVYAI), 366-386 (LPPAIVGGVALPIGMFAFAWT), 395-415 (VSIILSAPFGFGCVLVILPIM), 427-447 (ASVLAAAAIFRSVVGAVFPLF), and 457-477 (IHWASSIPAFLTLLCMPFPLI).

Belongs to the major facilitator superfamily. Sugar transporter (TC 2.A.1.1) family.

It localises to the membrane. Its function is as follows. Major facilitator-type transporter; part of the gene cluster that mediates the biosynthesis of sorbicillinoids, a diverse group of yellow secondary metabolites that restrict growth of competing pathogenic fungi but not of bacteria. The protein is Major facilitator-type transporter sorT of Penicillium rubens (strain ATCC 28089 / DSM 1075 / NRRL 1951 / Wisconsin 54-1255) (Penicillium chrysogenum).